The primary structure comprises 913 residues: Clumping factor B (913 aa).

An N-terminal signal peptide occupies residues 1-44 (MKKRIDYLSNKQNKYSIRRFTVGTTSVIVGATILFGIGNHQAQA). The YSIRK-G/S signaling motif motif lies at 15-26 (YSIRRFTVGTTS). Composition is skewed to polar residues over residues 44–61 (ASEQSNDTTQSSKNNASA) and 68–95 (MIETPQLNTTANDTSDISANTNSANVDS). The disordered stretch occupies residues 44-192 (ASEQSNDTTQ…QGTSKPSVRT (149 aa)). Positions 45-542 (SEQSNDTTQS…GSADGDSAVN (498 aa)) are ligand binding A region. Residues 96–119 (TTKPMSTQTSNTTTTEPASTNETP) are compositionally biased toward low complexity. The segment covering 120-189 (QPTAIKNQAT…SNAQGTSKPS (70 aa)) has biased composition (polar residues). Positions 272-276 (DYSNS) match the MIDAS-like motif motif. Residues 530–885 (YGGGSADGDS…ETGDKSENTN (356 aa)) form a disordered region. Pro residues predominate over residues 545 to 555 (DPTPGPPVDPE). Over residues 556-837 (PSPDPEPEPT…SDSDSDSDSD (282 aa)) the composition is skewed to acidic residues. The span at 841-852 (RVTPPNNEQKAP) shows a compositional bias: polar residues. The span at 869-882 (HKTDALPETGDKSE) shows a compositional bias: basic and acidic residues. An LPXTG sorting signal motif is present at residues 874 to 878 (LPETG). Residue T877 is modified to Pentaglycyl murein peptidoglycan amidated threonine. The propeptide at 878-913 (GDKSENTNATLFGAMMALLGSLLLFRKRKQDHKEKA) is removed by sortase.

The protein belongs to the serine-aspartate repeat-containing protein (SDr) family. In terms of processing, proteolytically cleaved by aureolysin (aur). This cleavage leads to the inactivation of ClfB.

It localises to the secreted. The protein resides in the cell wall. Functionally, cell surface-associated protein implicated in virulence by promoting bacterial attachment to both alpha- and beta-chains of human fibrinogen and inducing the formation of bacterial clumps. In Staphylococcus aureus (strain COL), this protein is Clumping factor B (clfB).